Here is a 529-residue protein sequence, read N- to C-terminus: Bifunctional purine biosynthesis protein PurH (529 aa).

The MGS-like domain occupies 1–148 (MQQRRPVRRA…KNHKDVAIVV (148 aa)). The residue at position 287 (K287) is an N6-acetyllysine.

It belongs to the PurH family.

It carries out the reaction (6R)-10-formyltetrahydrofolate + 5-amino-1-(5-phospho-beta-D-ribosyl)imidazole-4-carboxamide = 5-formamido-1-(5-phospho-D-ribosyl)imidazole-4-carboxamide + (6S)-5,6,7,8-tetrahydrofolate. The catalysed reaction is IMP + H2O = 5-formamido-1-(5-phospho-D-ribosyl)imidazole-4-carboxamide. The protein operates within purine metabolism; IMP biosynthesis via de novo pathway; 5-formamido-1-(5-phospho-D-ribosyl)imidazole-4-carboxamide from 5-amino-1-(5-phospho-D-ribosyl)imidazole-4-carboxamide (10-formyl THF route): step 1/1. Its pathway is purine metabolism; IMP biosynthesis via de novo pathway; IMP from 5-formamido-1-(5-phospho-D-ribosyl)imidazole-4-carboxamide: step 1/1. The protein is Bifunctional purine biosynthesis protein PurH of Escherichia coli O7:K1 (strain IAI39 / ExPEC).